The following is a 525-amino-acid chain: COP9 signalosome complex subunit 1b (525 aa).

Positions 298–460 (HFLNANFDHC…KILFAKEADQ (163 aa)) constitute a PCI domain.

It belongs to the CSN1 family. Component of the CSN complex, probably composed of CSN1b, alien/CSN2, CSN3, CSN4, CSN5, CSN6, CSN7 and CSN8.

It localises to the cytoplasm. It is found in the nucleus. Functionally, essential component of the COP9 signalosome complex (CSN), a complex involved in various cellular and developmental processes. The CSN complex is an essential regulator of the ubiquitin (Ubl) conjugation pathway by mediating the deneddylation of the cullin subunits of the SCF-type E3 ligase complexes, leading to decrease the Ubl ligase activity of SCF. The CSN complex plays an essential role in oogenesis and embryogenesis and is required for proper photoreceptor R cell differentiation and promote lamina glial cell migration or axon targeting. It also promotes Ubl-dependent degradation of cyclin E (CycE) during early oogenesis. The chain is COP9 signalosome complex subunit 1b (CSN1b) from Drosophila melanogaster (Fruit fly).